Here is a 545-residue protein sequence, read N- to C-terminus: MFCEQCEQTASGNGCHQWGACGKSPEVNAVQDLLVYCLRGLAPVVLKAKELGISTHQADVFTGEALFATMTNVNFDKKRFTKYIRDCITIREQLKAAINQPVAWTDICCYQPNFNESLVEQGQNVALTLISQATNNLDIFSLKLTVLYGIKGCASYNFHAQELGQEDEKVYSFIQEALASLDRNDLSLNDWVNLALKVGETNLKAMELLDAGHTSTYGHPTPTSVPLNPRLGKALLVSGHDIKQLAAILQQTANTGLTIYTHGELLPAHGYPILKQKYPHLYGHYGTAWQNQTKDFAKFPGAIIVTTNCLMPPHETYDEKLFTIGPVGYQGINYLASDETGTPDFTPAIEKALSMPGFTTEETPRNVMVGFAHDAVLKVADTVIEAVQQGKIRHFFLVGGCDGAKPGRTYYTEFVEKVPKDCIVLTLACGKFRFFDKQLGSIGTLPRLMDVGQCNDAYSAIKIALGLANAFNIEVNQLPLSMILSWYEQKAIAVLLTLLYLGIKDIRLGPTLPAFITPNLFKLLSETYNLQSITTPEKDLAACLA.

[4Fe-4S] cluster contacts are provided by cysteine 3, cysteine 6, cysteine 15, and cysteine 21. Hybrid [4Fe-2O-2S] cluster-binding residues include histidine 240, glutamate 264, cysteine 309, cysteine 401, cysteine 429, cysteine 454, glutamate 488, and lysine 490. A Cysteine persulfide modification is found at cysteine 401.

The protein belongs to the HCP family. The cofactor is [4Fe-4S] cluster. Hybrid [4Fe-2O-2S] cluster serves as cofactor.

Its subcellular location is the cytoplasm. It carries out the reaction A + NH4(+) + H2O = hydroxylamine + AH2 + H(+). Its function is as follows. Catalyzes the reduction of hydroxylamine to form NH(3) and H(2)O. The sequence is that of Hydroxylamine reductase from Rippkaea orientalis (strain PCC 8801 / RF-1) (Cyanothece sp. (strain PCC 8801)).